Here is a 1700-residue protein sequence, read N- to C-terminus: A-kinase anchor protein SPHKAP (1700 aa).

3 disordered regions span residues 364-385, 742-778, and 793-885; these read SNLNPGDHEDTRNALPPRQDGE, IRRRETEPSCQPSDPGASQAWTKATESSSSSPLSNSH, and SKQD…NTQE. A compositionally biased stretch (low complexity) spans 768-778; sequence SSSSSPLSNSH. The span at 822–831 shows a compositional bias: polar residues; the sequence is DSSTATTSSK. Positions 839–855 are enriched in basic and acidic residues; that stretch reads AGEDTKSPHHSENECRA. The segment covering 857 to 873 has biased composition (polar residues); the sequence is SEGQRSPTVSQSRSGSQ. A PKA-RII subunit binding domain region spans residues 929–946; it reads FAEELADTVVSMATEIAA. The segment at 980-1006 is disordered; the sequence is KRKKESQGSGTAVRKHKPPRLSEIKRK. A phosphoserine mark is found at S1025, S1085, S1107, S1120, S1121, S1124, S1259, and S1288. Disordered stretches follow at residues 1374-1414, 1481-1535, and 1585-1604; these read DSVT…PVPI, IHSD…DTSS, and GQSESTEAPASGPPTGTASP. Residues 1383–1398 show a composition bias toward polar residues; it reads PVSSLSKTASLTNHSP. The segment covering 1586 to 1604 has biased composition (polar residues); it reads QSESTEAPASGPPTGTASP.

This sequence belongs to the AKAP110 family. Interacts (via the PKA-RII subunit binding domain) with the RI subunit of PKA. Interacts with SPHK1; the interaction greatly reduces SPHK1 activity. Highly expressed in heart. Both isoforms abundantly expressed in ventricle. Also expressed in spleen, ovary and brain.

The protein resides in the cytoplasm. Functionally, anchoring protein that binds preferentially to the type I regulatory subunit of c-AMP-dependent protein kinase (PKA type I) and targets it to distinct subcellular compartments. May act as a converging factor linking cAMP and sphingosine signaling pathways. Plays a regulatory role in the modulation of SPHK1. The chain is A-kinase anchor protein SPHKAP (SPHKAP) from Homo sapiens (Human).